Consider the following 325-residue polypeptide: NADH-quinone oxidoreductase subunit H (325 aa).

A run of 8 helical transmembrane segments spans residues 11–31, 81–101, 114–134, 154–174, 186–206, 237–257, 265–285, and 304–324; these read VIIAVVKALVILFVVVGCGAF, VIFTLAPMIAFTSLLLAMAIV, IGLLFFLMMAGLAVYAVLFAG, LSYEVFLGLSLMGVVAQAGSF, LWNVIPQFLGFLTFCIAGVAV, FFVGEYVGIVTVSALIVTLFF, LPPVIWFALKTAFFMMMFILI, and VCLPLTLLNLLATAAVILYTA.

It belongs to the complex I subunit 1 family. NDH-1 is composed of 13 different subunits. Subunits NuoA, H, J, K, L, M, N constitute the membrane sector of the complex.

The protein localises to the cell inner membrane. The catalysed reaction is a quinone + NADH + 5 H(+)(in) = a quinol + NAD(+) + 4 H(+)(out). NDH-1 shuttles electrons from NADH, via FMN and iron-sulfur (Fe-S) centers, to quinones in the respiratory chain. The immediate electron acceptor for the enzyme in this species is believed to be ubiquinone. Couples the redox reaction to proton translocation (for every two electrons transferred, four hydrogen ions are translocated across the cytoplasmic membrane), and thus conserves the redox energy in a proton gradient. This subunit may bind ubiquinone. The chain is NADH-quinone oxidoreductase subunit H from Erwinia tasmaniensis (strain DSM 17950 / CFBP 7177 / CIP 109463 / NCPPB 4357 / Et1/99).